Reading from the N-terminus, the 129-residue chain is HTH-type transcriptional regulator HmrR (129 aa).

The 68-residue stretch at 1–68 (MNIGEASERS…VEECRQLLAL (68 aa)) folds into the HTH merR-type domain. The segment at residues 4 to 23 (GEASERSGLPSKTIRYYEDI) is a DNA-binding region (H-T-H motif).

As to quaternary structure, homodimer.

Its subcellular location is the cytoplasm. Regulates the transcription of actP. It detects cytoplasmic copper stress and activates transcription in response to increasing copper concentrations. In the absence of copper, it negatively regulates the transcription of actP. The chain is HTH-type transcriptional regulator HmrR (hmrR) from Rhizobium leguminosarum bv. viciae.